The following is a 188-amino-acid chain: Elongation factor P (188 aa).

K34 bears the N6-(3,6-diaminohexanoyl)-5-hydroxylysine mark.

This sequence belongs to the elongation factor P family. In terms of processing, may be beta-lysylated on the epsilon-amino group of Lys-34 by the combined action of EpmA and EpmB, and then hydroxylated on the C5 position of the same residue by EpmC (if this protein is present). Lysylation is critical for the stimulatory effect of EF-P on peptide-bond formation. The lysylation moiety may extend toward the peptidyltransferase center and stabilize the terminal 3-CCA end of the tRNA. Hydroxylation of the C5 position on Lys-34 may allow additional potential stabilizing hydrogen-bond interactions with the P-tRNA.

Its subcellular location is the cytoplasm. The protein operates within protein biosynthesis; polypeptide chain elongation. Functionally, involved in peptide bond synthesis. Alleviates ribosome stalling that occurs when 3 or more consecutive Pro residues or the sequence PPG is present in a protein, possibly by augmenting the peptidyl transferase activity of the ribosome. Modification of Lys-34 is required for alleviation. This Aliivibrio fischeri (strain ATCC 700601 / ES114) (Vibrio fischeri) protein is Elongation factor P.